Consider the following 393-residue polypeptide: 4-hydroxyphenylpyruvate dioxygenase (393 aa).

Residue Thr2 is modified to N-acetylthreonine. 2 VOC domains span residues 18–149 (HFHS…LVEK) and 180–338 (IIDH…IFTK). Lys132 bears the N6-succinyllysine mark. His183 serves as a coordination point for Fe cation. Phosphoserine is present on residues Ser211, Ser226, and Ser250. 2 residues coordinate Fe cation: His266 and Glu349.

It belongs to the 4HPPD family. As to quaternary structure, homodimer. The cofactor is Fe cation.

Its subcellular location is the cytoplasm. The protein localises to the endoplasmic reticulum membrane. It is found in the golgi apparatus membrane. The enzyme catalyses 3-(4-hydroxyphenyl)pyruvate + O2 = homogentisate + CO2. It functions in the pathway amino-acid degradation; L-phenylalanine degradation; acetoacetate and fumarate from L-phenylalanine: step 3/6. Functionally, catalyzes the conversion of 4-hydroxyphenylpyruvic acid to homogentisic acid, one of the steps in tyrosine catabolism. The chain is 4-hydroxyphenylpyruvate dioxygenase (Hpd) from Mus musculus (Mouse).